Consider the following 551-residue polypeptide: Nucleobase-ascorbate transporter 3 (551 aa).

The segment at 1–30 (MVETGHHHQHPPAPAAAGHPPVPSMAMARN) is disordered. The next 12 helical transmembrane spans lie at 56–76 (ETVV…VLIA), 92–111 (RVIQ…QTLI), 117–136 (TVMG…IRDY), 158–178 (SLII…WGNL), 179–199 (IRIF…LGLF), 202–222 (GFPL…LLII), 242–262 (ALLV…VSGA), 306–326 (VFGM…VFFA), 390–410 (FFMI…SIPL), 412–432 (IFAG…ISFI), 442–462 (NMYV…YFLA), and 481–501 (DILN…ATIL).

Belongs to the nucleobase:cation symporter-2 (NCS2) (TC 2.A.40) family. As to expression, expressed in the apical meristem 4 days after imbibition (DAI). Expressed in the major veins of rosette leaves and pedicels. Expressed in the root central cylinder, root meristems, root tips and lateral root primordia.

It localises to the membrane. In Arabidopsis thaliana (Mouse-ear cress), this protein is Nucleobase-ascorbate transporter 3 (NAT3).